Reading from the N-terminus, the 138-residue chain is Nucleoside diphosphate kinase (138 aa).

ATP-binding residues include Lys-9, Phe-57, Arg-85, Thr-91, Arg-102, and Asn-112. His-115 acts as the Pros-phosphohistidine intermediate in catalysis.

The protein belongs to the NDK family. In terms of assembly, homotetramer. Requires Mg(2+) as cofactor.

The protein localises to the cytoplasm. The enzyme catalyses a 2'-deoxyribonucleoside 5'-diphosphate + ATP = a 2'-deoxyribonucleoside 5'-triphosphate + ADP. It catalyses the reaction a ribonucleoside 5'-diphosphate + ATP = a ribonucleoside 5'-triphosphate + ADP. Functionally, major role in the synthesis of nucleoside triphosphates other than ATP. The ATP gamma phosphate is transferred to the NDP beta phosphate via a ping-pong mechanism, using a phosphorylated active-site intermediate. In Deinococcus geothermalis (strain DSM 11300 / CIP 105573 / AG-3a), this protein is Nucleoside diphosphate kinase.